Here is a 395-residue protein sequence, read N- to C-terminus: S-adenosylmethionine synthase (395 aa).

His-14 provides a ligand contact to ATP. Residue Asp-16 participates in Mg(2+) binding. K(+) is bound at residue Glu-42. Residues Glu-55 and Gln-98 each coordinate L-methionine. The flexible loop stretch occupies residues 98-108 (QSPDIALGVDK). Residues 175–177 (DGK), 242–243 (RF), Asp-251, 257–258 (RK), Ala-274, and Lys-278 each bind ATP. Asp-251 contacts L-methionine. Lys-282 is an L-methionine binding site.

Belongs to the AdoMet synthase family. As to quaternary structure, homotetramer; dimer of dimers. The cofactor is Mg(2+). K(+) serves as cofactor.

The protein localises to the cytoplasm. The enzyme catalyses L-methionine + ATP + H2O = S-adenosyl-L-methionine + phosphate + diphosphate. It participates in amino-acid biosynthesis; S-adenosyl-L-methionine biosynthesis; S-adenosyl-L-methionine from L-methionine: step 1/1. Functionally, catalyzes the formation of S-adenosylmethionine (AdoMet) from methionine and ATP. The overall synthetic reaction is composed of two sequential steps, AdoMet formation and the subsequent tripolyphosphate hydrolysis which occurs prior to release of AdoMet from the enzyme. The protein is S-adenosylmethionine synthase of Thermosipho africanus (strain TCF52B).